The following is a 460-amino-acid chain: Adenylosuccinate lyase (460 aa).

N(6)-(1,2-dicarboxyethyl)-AMP is bound by residues 15–16 (RY), 88–90 (NHD), and 120–121 (TS). Histidine 169 serves as the catalytic Proton donor/acceptor. Glutamine 245 serves as a coordination point for N(6)-(1,2-dicarboxyethyl)-AMP. Catalysis depends on serine 293, which acts as the Proton donor/acceptor. Residues serine 294, 299-301 (KIN), asparagine 307, arginine 333, and 338-342 (STVLR) each bind N(6)-(1,2-dicarboxyethyl)-AMP.

The protein belongs to the lyase 1 family. Adenylosuccinate lyase subfamily. Homotetramer. Residues from neighboring subunits contribute catalytic and substrate-binding residues to each active site.

The enzyme catalyses N(6)-(1,2-dicarboxyethyl)-AMP = fumarate + AMP. It carries out the reaction (2S)-2-[5-amino-1-(5-phospho-beta-D-ribosyl)imidazole-4-carboxamido]succinate = 5-amino-1-(5-phospho-beta-D-ribosyl)imidazole-4-carboxamide + fumarate. Its pathway is purine metabolism; AMP biosynthesis via de novo pathway; AMP from IMP: step 2/2. It functions in the pathway purine metabolism; IMP biosynthesis via de novo pathway; 5-amino-1-(5-phospho-D-ribosyl)imidazole-4-carboxamide from 5-amino-1-(5-phospho-D-ribosyl)imidazole-4-carboxylate: step 2/2. In terms of biological role, catalyzes two reactions in de novo purine nucleotide biosynthesis. Catalyzes the breakdown of 5-aminoimidazole- (N-succinylocarboxamide) ribotide (SAICAR or 2-[5-amino-1-(5-phospho-beta-D-ribosyl)imidazole-4-carboxamido]succinate) to 5-aminoimidazole-4-carboxamide ribotide (AICAR or 5-amino-1-(5-phospho-beta-D-ribosyl)imidazole-4-carboxamide) and fumarate, and of adenylosuccinate (ADS or N(6)-(1,2-dicarboxyethyl)-AMP) to adenosine monophosphate (AMP) and fumarate. The sequence is that of Adenylosuccinate lyase (purB) from Buchnera aphidicola subsp. Baizongia pistaciae (strain Bp).